The primary structure comprises 159 residues: Thioredoxin O2, mitochondrial (159 aa).

S40 carries the phosphoserine modification. The region spanning 43–159 (FAEGDRSSFV…LKSVMEQLYK (117 aa)) is the Thioredoxin domain. Catalysis depends on nucleophile residues C83 and C86. C83 and C86 form a disulfide bridge.

This sequence belongs to the thioredoxin family. Plant O-type subfamily.

It localises to the mitochondrion. Functionally, thiol-disulfide oxidoreductase that may participate in various redox reactions. Possesses insulin disulfide bonds reducing activity. Reduced by thioredoxin reductases NTRA and NTRB. In Arabidopsis thaliana (Mouse-ear cress), this protein is Thioredoxin O2, mitochondrial.